A 578-amino-acid polypeptide reads, in one-letter code: Proline--tRNA ligase (578 aa).

It belongs to the class-II aminoacyl-tRNA synthetase family. ProS type 1 subfamily. As to quaternary structure, homodimer.

Its subcellular location is the cytoplasm. It catalyses the reaction tRNA(Pro) + L-proline + ATP = L-prolyl-tRNA(Pro) + AMP + diphosphate. Catalyzes the attachment of proline to tRNA(Pro) in a two-step reaction: proline is first activated by ATP to form Pro-AMP and then transferred to the acceptor end of tRNA(Pro). As ProRS can inadvertently accommodate and process non-cognate amino acids such as alanine and cysteine, to avoid such errors it has two additional distinct editing activities against alanine. One activity is designated as 'pretransfer' editing and involves the tRNA(Pro)-independent hydrolysis of activated Ala-AMP. The other activity is designated 'posttransfer' editing and involves deacylation of mischarged Ala-tRNA(Pro). The misacylated Cys-tRNA(Pro) is not edited by ProRS. This Burkholderia cenocepacia (strain HI2424) protein is Proline--tRNA ligase.